Reading from the N-terminus, the 85-residue chain is Large ribosomal subunit protein bL27 (85 aa).

Residues 1 to 20 are disordered; sequence MATKKAGGSTRNGRDSEAKR.

The protein belongs to the bacterial ribosomal protein bL27 family.

The sequence is that of Large ribosomal subunit protein bL27 from Haemophilus influenzae (strain PittEE).